A 417-amino-acid polypeptide reads, in one-letter code: 3-isopropylmalate dehydratase large subunit 2 (417 aa).

Positions 298, 358, and 361 each coordinate [4Fe-4S] cluster.

It belongs to the aconitase/IPM isomerase family. LeuC type 2 subfamily. As to quaternary structure, heterodimer of LeuC and LeuD. The cofactor is [4Fe-4S] cluster.

It carries out the reaction (2R,3S)-3-isopropylmalate = (2S)-2-isopropylmalate. It participates in amino-acid biosynthesis; L-leucine biosynthesis; L-leucine from 3-methyl-2-oxobutanoate: step 2/4. Its function is as follows. Catalyzes the isomerization between 2-isopropylmalate and 3-isopropylmalate, via the formation of 2-isopropylmaleate. The chain is 3-isopropylmalate dehydratase large subunit 2 from Thermotoga maritima (strain ATCC 43589 / DSM 3109 / JCM 10099 / NBRC 100826 / MSB8).